A 347-amino-acid chain; its full sequence is Heme A synthase (347 aa).

The next 8 helical transmembrane spans lie at 14 to 34, 96 to 116, 129 to 149, 162 to 182, 199 to 219, 260 to 280, 287 to 307, and 311 to 331; these read VKIWLCICCIGILVMVFIGGI, FHRLLGRIVGLVFLIPFLYFM, FILIAFLILVQGVMGWYMVKS, LAMHLLLALAIFYLLWKHFLL, VFYIIISLITIQITCGALVAG, FIHEVIALLILIIVVITLLVL, MYLLLALLLIQLTLGILTFIY, and IILASLHQVTAFILFASSIYL. A heme-binding site is contributed by histidine 262. Histidine 317 contacts heme.

The protein belongs to the COX15/CtaA family. Type 2 subfamily. Interacts with CtaB. The cofactor is heme b.

It is found in the cell membrane. It catalyses the reaction Fe(II)-heme o + 2 A + H2O = Fe(II)-heme a + 2 AH2. It functions in the pathway porphyrin-containing compound metabolism; heme A biosynthesis; heme A from heme O: step 1/1. Its function is as follows. Catalyzes the conversion of heme O to heme A by two successive hydroxylations of the methyl group at C8. The first hydroxylation forms heme I, the second hydroxylation results in an unstable dihydroxymethyl group, which spontaneously dehydrates, resulting in the formyl group of heme A. In Ehrlichia ruminantium (strain Welgevonden), this protein is Heme A synthase.